Reading from the N-terminus, the 345-residue chain is Trans-3-hydroxy-L-proline dehydratase (345 aa).

The active-site Proton acceptor is the Ser-90. Substrate is bound by residues 91 to 92 (GS), Asp-252, and 257 to 258 (GT).

This sequence belongs to the proline racemase family.

The catalysed reaction is trans-3-hydroxy-L-proline = 1-pyrroline-2-carboxylate + H2O. In terms of biological role, catalyzes the dehydration of trans-3-hydroxy-L-proline (t3LHyp) to Delta(1)-pyrroline-2-carboxylate (Pyr2C). May be involved in a degradation pathway that converts t3LHyp to L-proline, which would allow S.novella to grow on t3LHyp as a sole carbon source. The protein is Trans-3-hydroxy-L-proline dehydratase of Ancylobacter novellus (strain ATCC 8093 / DSM 506 / JCM 20403 / CCM 1077 / IAM 12100 / NBRC 12443 / NCIMB 10456) (Starkeya novella).